The following is a 390-amino-acid chain: Heparan sulfate glucosamine 3-O-sulfotransferase 3B1 (390 aa).

Residues 1–25 form a disordered region; that stretch reads MGQRLSGGRSCLDVPGRLLPQPPPP. At 1-32 the chain is on the cytoplasmic side; sequence MGQRLSGGRSCLDVPGRLLPQPPPPPPPVRRK. A helical; Signal-anchor for type II membrane protein membrane pass occupies residues 33–53; it reads LALLFAMLCVWLYMFLYSCAG. At 54 to 390 the chain is on the lumenal side; the sequence is SCAAAPGLLL…QMTGHDFGWD (337 aa). The tract at residues 74 to 133 is disordered; that stretch reads PPALATAPDGTPPRLPFRAPPATPLASGKEMAEGAASPEEQSPEVPDSPSPISSFFSGSG. The span at 83 to 96 shows a compositional bias: pro residues; that stretch reads GTPPRLPFRAPPAT. The segment covering 123 to 133 has biased composition (low complexity); that stretch reads SPISSFFSGSG. A 3'-phosphoadenylyl sulfate-binding site is contributed by 147-151; that stretch reads KGGTR. Substrate is bound by residues 169 to 175 and 200 to 203; these read EPHFFDR and KTPS. The 3'-phosphoadenylyl sulfate site is built by Arg-228 and Ser-236. Residue Asn-258 is glycosylated (N-linked (GlcNAc...) asparagine). 268-269 contacts substrate; the sequence is WS. N-linked (GlcNAc...) asparagine glycosylation is present at Asn-329. Cys-336 and Cys-348 are oxidised to a cystine. Residue 353–357 participates in 3'-phosphoadenylyl sulfate binding; the sequence is KGRTH.

The protein belongs to the sulfotransferase 1 family. Ubiquitous. Most abundant in liver and placenta, followed by heart and kidney.

It is found in the golgi apparatus membrane. It carries out the reaction alpha-D-glucosaminyl-[heparan sulfate](n) + 3'-phosphoadenylyl sulfate = 3-sulfo-alpha-D-glucosaminyl-[heparan sulfate](n) + adenosine 3',5'-bisphosphate + H(+). In terms of biological role, sulfotransferase that utilizes 3'-phospho-5'-adenylyl sulfate (PAPS) to catalyze the transfer of a sulfo group to an N-unsubstituted glucosamine linked to a 2-O-sulfo iduronic acid unit on heparan sulfate. Catalyzes the O-sulfation of glucosamine in IdoUA2S-GlcNS and also in IdoUA2S-GlcNH2. The substrate-specific O-sulfation generates an enzyme-modified heparan sulfate which acts as a binding receptor to Herpes simplex virus-1 (HSV-1) and permits its entry. Unlike HS3ST1/3-OST-1, does not convert non-anticoagulant heparan sulfate to anticoagulant heparan sulfate. This is Heparan sulfate glucosamine 3-O-sulfotransferase 3B1 (HS3ST3B1) from Homo sapiens (Human).